We begin with the raw amino-acid sequence, 393 residues long: MDALVEDDICILNHEKAHRRDPVTPVSIYSGDESVASHFALVTAYEDIKKRLKDSEKENSFLKKRIRILEEKLIGARKDEETSSVGREQVNKAYHAYREVCIDRDNLKSKLDKMNKDNSESLKVLNEQLQSKEVELLQLRTEVETQQVIRNLNPPSSNWEVEKLSCDLKIHGLEQELELLRKECRDLRIELQKAKQTDPSLDDNLNCRDLQRLSVSSDNMQSAYWELKREMSNLHLVTQVQAELLRKLKTPAAIKKACAPAGCMEDLGKDSTKLHLSNFTAAYKRHAPLSPNGKTLCHATPSPLPGDAKVLSEKAALQSWTDHERSIPHDGTNFQEHNSYSRNSLEDNSWVFPSPPKSSETTFGEMKSKPLPLPNLPPLHYLDQHNQNCHYKH.

A homodimerization region spans residues 1-198 (MDALVEDDIC…IELQKAKQTD (198 aa)). Residues 40–198 (ALVTAYEDIK…IELQKAKQTD (159 aa)) are a coiled coil. The tract at residues 217–258 (SDNMQSAYWELKREMSNLHLVTQVQAELLRKLKTPAAIKKAC) is interaction with TBK1 and IKBKE. Serine 319 bears the Phosphoserine mark. Disordered regions lie at residues 321 to 340 (TDHE…HNSY) and 345 to 393 (LEDN…HYKH). Serine 354 carries the phosphoserine modification. Positions 384–393 (QHNQNCHYKH) are enriched in polar residues.

Homodimer. Interacts with IKBKE, TBK1 and TICAM1. Interacts with TAX1BP1. Interacts with CALCOCO2. Ubiquitinated via 'Lys-48'-linked polyubiquitination by TRIM38, leading to its degradation.

The protein localises to the cytoplasm. In terms of biological role, adapter protein which binds TBK1 and IKBKE playing a role in antiviral innate immunity. Activates serine/threonine-protein kinase TBK1 and facilitates its oligomerization. Enhances the phosphorylation of NF-kappa-B p65 subunit RELA by TBK1. Promotes TBK1-induced as well as TNF-alpha or PMA-induced activation of NF-kappa-B. Participates in IFNB promoter activation via TICAM1. This Bos taurus (Bovine) protein is 5-azacytidine-induced protein 2 (AZI2).